We begin with the raw amino-acid sequence, 313 residues long: ADP-L-glycero-D-manno-heptose-6-epimerase (313 aa).

NADP(+)-binding positions include 10–11 (MI), 31–32 (DN), K38, R53, 75–79 (EGACS), and N92. Residue Y139 is the Proton acceptor of the active site. K143 contributes to the NADP(+) binding site. N174 lines the substrate pocket. 2 residues coordinate NADP(+): V175 and K183. The Proton acceptor role is filled by K183. Substrate is bound by residues S185, H192, 206–209 (FAGS), R214, and Y277.

This sequence belongs to the NAD(P)-dependent epimerase/dehydratase family. HldD subfamily. As to quaternary structure, homopentamer. It depends on NADP(+) as a cofactor.

The catalysed reaction is ADP-D-glycero-beta-D-manno-heptose = ADP-L-glycero-beta-D-manno-heptose. Its pathway is nucleotide-sugar biosynthesis; ADP-L-glycero-beta-D-manno-heptose biosynthesis; ADP-L-glycero-beta-D-manno-heptose from D-glycero-beta-D-manno-heptose 7-phosphate: step 4/4. It functions in the pathway bacterial outer membrane biogenesis; LPS core biosynthesis. Catalyzes the interconversion between ADP-D-glycero-beta-D-manno-heptose and ADP-L-glycero-beta-D-manno-heptose via an epimerization at carbon 6 of the heptose. This is ADP-L-glycero-D-manno-heptose-6-epimerase from Vibrio vulnificus (strain YJ016).